The sequence spans 332 residues: UPF0285 protein MK0078 (332 aa).

The protein belongs to the UPF0285 family.

This Methanopyrus kandleri (strain AV19 / DSM 6324 / JCM 9639 / NBRC 100938) protein is UPF0285 protein MK0078.